Consider the following 75-residue polypeptide: Insecticidal toxin OcyC10 (75 aa).

The signal sequence occupies residues 1–19 (MNFATKIVILLLVAALILA). Cystine bridges form between cysteine 50–cysteine 62 and cysteine 56–cysteine 68.

Expressed by the venom gland.

The protein resides in the secreted. Insecticidal toxin. This chain is Insecticidal toxin OcyC10, found in Opisthacanthus cayaporum (South American scorpion).